A 114-amino-acid chain; its full sequence is Malate dehydrogenase (114 aa).

Residue aspartate 4 participates in NAD(+) binding. Substrate contacts are provided by arginine 51 and arginine 57. NAD(+) is bound by residues asparagine 64 and 87 to 89; that span reads ITN. Residue asparagine 89 coordinates substrate.

Belongs to the LDH/MDH superfamily. MDH type 1 family. As to quaternary structure, homodimer.

It catalyses the reaction (S)-malate + NAD(+) = oxaloacetate + NADH + H(+). In terms of biological role, catalyzes the reversible oxidation of malate to oxaloacetate. This chain is Malate dehydrogenase (mdh), found in Klebsiella pneumoniae subsp. rhinoscleromatis.